The sequence spans 384 residues: MNYSALITLAQKLIQQPSVSPNHHSCHEIIANYLEKLNFNVELMRFDNTLNLWAFHSCKKQQKHTTLLFIGHTDVVDPGDPQFWDYPPFSGLVHNNMLHGRGAIDMKGALAAMLVATANFIDQYPNYQGRIAFLITSDEEGSGINGTTKVVESLIARNEHINYCIVGEPSSQDQLGDVIKNGRRGSLTGQLTIHGSQGHVAYPQFSKNPIHLIIPALSDLLNITWDREKSILFPPTAIQITNIYSNHKNNNVTPHTVILNFNVRFNDKCSIDNIKRYINDIFTRHTLPYNINWKLSAEPYFSKPGQLTNVAINAIKYYQKFEPRLETTGGTSDGRFIAKMGTEVIELGARNHMIHKVNEYIDLIDLKLLSSIYKKIIEDLILIQ.

H72 contacts Zn(2+). D74 is a catalytic residue. D105 lines the Zn(2+) pocket. E139 functions as the Proton acceptor in the catalytic mechanism. Zn(2+) is bound by residues E140, E168, and H355.

It belongs to the peptidase M20A family. DapE subfamily. In terms of assembly, homodimer. The cofactor is Zn(2+). Co(2+) is required as a cofactor.

The enzyme catalyses N-succinyl-(2S,6S)-2,6-diaminopimelate + H2O = (2S,6S)-2,6-diaminopimelate + succinate. The protein operates within amino-acid biosynthesis; L-lysine biosynthesis via DAP pathway; LL-2,6-diaminopimelate from (S)-tetrahydrodipicolinate (succinylase route): step 3/3. Functionally, catalyzes the hydrolysis of N-succinyl-L,L-diaminopimelic acid (SDAP), forming succinate and LL-2,6-diaminopimelate (DAP), an intermediate involved in the bacterial biosynthesis of lysine and meso-diaminopimelic acid, an essential component of bacterial cell walls. This chain is Succinyl-diaminopimelate desuccinylase, found in Blochmanniella pennsylvanica (strain BPEN).